Consider the following 623-residue polypeptide: Chaperone protein DnaK (623 aa).

Positions 582–603 (QQQQAAEQAAQQQSGGQQASGS) are enriched in low complexity. A disordered region spans residues 582–623 (QQQQAAEQAAQQQSGGQQASGSNPGKDPNVVDADYEVVNDKK). The span at 614–623 (ADYEVVNDKK) shows a compositional bias: acidic residues.

Belongs to the heat shock protein 70 family.

Functionally, acts as a chaperone. The chain is Chaperone protein DnaK from Methanocella arvoryzae (strain DSM 22066 / NBRC 105507 / MRE50).